Consider the following 791-residue polypeptide: Cytochrome c oxidase polypeptide I+III (791 aa).

A COX1 region spans residues 1-473 (MAITAKPKAG…LLSTIGAYIL (473 aa)). A helical membrane pass occupies residues 29 to 49 (LMYTATAFFAFALAGVFSLLI). Histidine 73 contacts Fe(II)-heme a. A run of 17 helical transmembrane segments spans residues 78–98 (LFFF…VPLM), 111–131 (AFSY…YFFP), 155–175 (FYLA…ANFV), 201–221 (ASVL…LVLL), 244–264 (FFWF…LGIL), 282–302 (MVWA…HHMF), 312–332 (IAFA…LFNI), 347–367 (LYWV…GVML), 381–401 (FVVA…AFAG), 423–443 (FWLF…LGYL), 464–484 (LLST…IYTM), 566–586 (FAFF…WVFL), 617–637 (AWMG…ILIA), 657–677 (LWLA…VHFA), 691–711 (FGLL…SWEF), 729–749 (FFTI…GLIL), and 771–791 (SMYW…FYVW). Residues histidine 250, tyrosine 254, histidine 299, and histidine 300 each contribute to the Cu cation site. The segment at residues 250–254 (HPTVY) is a cross-link (1'-histidyl-3'-tyrosine (His-Tyr)). A heme a3-binding site is contributed by histidine 385. Histidine 387 provides a ligand contact to Fe(II)-heme a. The tract at residues 545-791 (DPAHIHLPNS…LVIVTIFYVW (247 aa)) is COX3.

This sequence in the N-terminal section; belongs to the heme-copper respiratory oxidase family. It in the C-terminal section; belongs to the cytochrome c oxidase subunit 3 family. In terms of assembly, possibly a heterodimer of A-protein (contains: cytochrome c oxidase subunits I and III) and subunit II. The A-protein could also present a precursor form of subunits I and III. Cu(2+) serves as cofactor. It depends on heme as a cofactor.

Its subcellular location is the cell membrane. It catalyses the reaction 4 Fe(II)-[cytochrome c] + O2 + 8 H(+)(in) = 4 Fe(III)-[cytochrome c] + 2 H2O + 4 H(+)(out). Its pathway is energy metabolism; oxidative phosphorylation. Its function is as follows. Cytochrome c oxidase is the component of the respiratory chain that catalyzes the reduction of oxygen to water. Subunits 1-3 form the functional core of the enzyme complex. Co I is the catalytic subunit of the enzyme. Electrons originating in cytochrome c are transferred via the copper A center of subunit 2 and heme a of subunit 1 to the bimetallic center formed by heme a3 and copper B. This cytochrome c oxidase shows proton pump activity across the membrane in addition to the electron transfer. This chain is Cytochrome c oxidase polypeptide I+III (caaA), found in Thermus thermophilus (strain ATCC 27634 / DSM 579 / HB8).